The chain runs to 255 residues: MSRRRRIYEGKAKVLYEGPEPGTLIQHFKDDATAFNAKKHQVIEGKGVLNNRISEYLFQHLNDIGVPTHFIRRLNMREQLIREVEIVPLEVVVRNVAAGSLSQRLGIEEGTQLPRSIIEFYYKNDQLNDPMVSEEHITAFGWATPQEIDDIMALAIRVNDFLTGLFLGIGIRLVDFKMECGRLFENEMMRIIVADEISPDSCRLWDIKSNEKLDKDRFRRDLGGLLEAYTEVAKRLGILMENERPAGSGPVLVKS.

It belongs to the SAICAR synthetase family.

The enzyme catalyses 5-amino-1-(5-phospho-D-ribosyl)imidazole-4-carboxylate + L-aspartate + ATP = (2S)-2-[5-amino-1-(5-phospho-beta-D-ribosyl)imidazole-4-carboxamido]succinate + ADP + phosphate + 2 H(+). Its pathway is purine metabolism; IMP biosynthesis via de novo pathway; 5-amino-1-(5-phospho-D-ribosyl)imidazole-4-carboxamide from 5-amino-1-(5-phospho-D-ribosyl)imidazole-4-carboxylate: step 1/2. This Bradyrhizobium diazoefficiens (strain JCM 10833 / BCRC 13528 / IAM 13628 / NBRC 14792 / USDA 110) protein is Phosphoribosylaminoimidazole-succinocarboxamide synthase A (purC1).